The chain runs to 495 residues: ATP-NADH kinase YEF1 (495 aa).

Residues 442-480 are disordered; it reads KYRLDSSKNGNDTISNPLESSCISSDAQDEERKSVTETE. Over residues 448 to 467 the composition is skewed to polar residues; it reads SKNGNDTISNPLESSCISSD.

It belongs to the NAD kinase family. Homooctamer. Mg(2+) is required as a cofactor. The cofactor is Mn(2+). Requires Co(2+) as cofactor. It depends on Ca(2+) as a cofactor.

The enzyme catalyses NADH + ATP = ADP + NADPH + H(+). In terms of biological role, ATP-NADH kinase with a low phosphorylation activity of both NADH and NAD(+) to produce NADP and NADPH by using ATP. UTR1 is responsible for essentially all of the NAD/NADH kinase activity resident in the cytoplasm, whereas POS5 is responsible for all mitochondrial NAD/NADH kinase activity and consequent mitochondrial genome maintenance. YEF1 can substitute for UTR1 when overexpressed. The chain is ATP-NADH kinase YEF1 (YEF1) from Saccharomyces cerevisiae (strain ATCC 204508 / S288c) (Baker's yeast).